We begin with the raw amino-acid sequence, 503 residues long: MVKAEHESRALAIFGTASDVGKSIVATALCRIFNNAGIDVAPYKAQNMSNNSGVTPDGCEIGRAQIVQAEAARVVPTADMNPVLLKPNSDTGAQVVLQGKVCSTETAKGYFRDTSLWAEAARESLERLMKRHEVVVIEGAGSCAEMNLYDRDFVNFRTARLSGASVILVADIDRGGVFGQVVGTLAVLPAEDRALVKGVIINRFRGDIDLFRDGVEMLESMTGIPVLGVIPYFRGFAIDAEDAVPLSAKVDPAGGPEEGKIGVAAIYFPHISNFTDLSPLEHDPAVELHYLHYPRSLKGYKALILPGSKNVRGDLAWLYSLGWEAEIRAFRAEGGIIMGICGGYQMLGNSIADPYGVEGSAGTTKALALLDVETVLEQDKCLANARGTVIGTSAEASGYEIHMGRSVVSDLCTPFIRVTARNNRPEDELDGAVSSDGRVMGSYFHALFDESSVKQWFLSLLEPSYRLQKHEKGRQESYELLADHFSSHLDLNKIFTIIDKVHS.

Positions 260–453 (KIGVAAIYFP…FHALFDESSV (194 aa)) constitute a GATase cobBQ-type domain. Residue cysteine 341 is the Nucleophile of the active site. Residue histidine 445 is part of the active site.

Belongs to the CobB/CobQ family. CobQ subfamily.

The protein operates within cofactor biosynthesis; adenosylcobalamin biosynthesis. Catalyzes amidations at positions B, D, E, and G on adenosylcobyrinic A,C-diamide. NH(2) groups are provided by glutamine, and one molecule of ATP is hydrogenolyzed for each amidation. In Pelodictyon phaeoclathratiforme (strain DSM 5477 / BU-1), this protein is Cobyric acid synthase.